Reading from the N-terminus, the 94-residue chain is uncharacterized protein (94 aa).

In terms of tissue distribution, expressed in heart.

This is an uncharacterized protein from Homo sapiens (Human).